Consider the following 504-residue polypeptide: Anaerobic nitric oxide reductase transcription regulator NorR (504 aa).

Asp57 carries the 4-aspartylphosphate modification. Positions 187 to 416 constitute a Sigma-54 factor interaction domain; that stretch reads MIGLSPGMTQ…LEHAIHRAVV (230 aa). ATP is bound by residues 215 to 222 and 278 to 287; these read GETGTGKE and ADNGTLFLDE. A DNA-binding region (H-T-H motif) is located at residues 479-498; it reads WAACARMLETDVANLHRLAK.

Its pathway is nitrogen metabolism; nitric oxide reduction. In terms of biological role, required for the expression of anaerobic nitric oxide (NO) reductase, acts as a transcriptional activator for at least the norVW operon. Activation also requires sigma-54. This is Anaerobic nitric oxide reductase transcription regulator NorR from Shigella flexneri serotype 5b (strain 8401).